Here is an 847-residue protein sequence, read N- to C-terminus: Acyl-homoserine lactone acylase QuiP (847 aa).

The N-terminal stretch at 1–26 is a signal peptide; that stretch reads MASPAFMRFLPRCGAAAAFGTLLGLA. Catalysis depends on Ser265, which acts as the Nucleophile.

Belongs to the peptidase S45 family. In terms of assembly, heterodimer of an alpha subunit and a beta subunit processed from the same precursor.

The protein localises to the periplasm. It carries out the reaction an N-acyl-L-homoserine lactone + H2O = L-homoserine lactone + a carboxylate. Catalyzes the deacylation of acyl-homoserine lactone (AHL or acyl-HSL), releasing homoserine lactone (HSL) and the corresponding fatty acid. Possesses a specificity for the degradation of long-chain acyl-HSLs (side chains of seven or more carbons in length). Appears to be the acyl-HSL acylase that underlies the ability of P.aeruginosa to degrade and utilize certain acyl-HSLs as growth nutrients, including one of its own quorum signals, 3-oxo-C12-HSL. Is thought to have a role in quorum quenching. This Pseudomonas aeruginosa (strain ATCC 15692 / DSM 22644 / CIP 104116 / JCM 14847 / LMG 12228 / 1C / PRS 101 / PAO1) protein is Acyl-homoserine lactone acylase QuiP (quiP).